We begin with the raw amino-acid sequence, 134 residues long: ATP synthase epsilon chain (134 aa).

This sequence belongs to the ATPase epsilon chain family. In terms of assembly, F-type ATPases have 2 components, CF(1) - the catalytic core - and CF(0) - the membrane proton channel. CF(1) has five subunits: alpha(3), beta(3), gamma(1), delta(1), epsilon(1). CF(0) has three main subunits: a, b and c.

The protein resides in the cell inner membrane. Functionally, produces ATP from ADP in the presence of a proton gradient across the membrane. The sequence is that of ATP synthase epsilon chain from Sinorhizobium fredii (strain NBRC 101917 / NGR234).